A 933-amino-acid chain; its full sequence is Phosphoenolpyruvate carboxylase (933 aa).

Catalysis depends on residues His164 and Lys595.

Belongs to the PEPCase type 1 family. It depends on Mg(2+) as a cofactor.

The enzyme catalyses oxaloacetate + phosphate = phosphoenolpyruvate + hydrogencarbonate. In terms of biological role, forms oxaloacetate, a four-carbon dicarboxylic acid source for the tricarboxylic acid cycle. The chain is Phosphoenolpyruvate carboxylase from Rhodopseudomonas palustris (strain BisB5).